A 228-amino-acid polypeptide reads, in one-letter code: Large ribosomal subunit protein uL16 (228 aa).

It belongs to the universal ribosomal protein uL16 family. Component of the small ribosomal subunit. Mature ribosomes consist of a small (40S) and a large (60S) subunit. The 40S subunit contains about 33 different proteins and 1 molecule of RNA (18S). The 60S subunit contains about 49 different proteins and 3 molecules of RNA (25S, 5.8S and 5S).

In Pinus taeda (Loblolly pine), this protein is Large ribosomal subunit protein uL16 (RPL10).